The sequence spans 59 residues: MDVKRVKQILSSSSRIDVTYEGVPVWIESCDEQSGVAQVYDVSNPGESVHVHVNALEEK.

It belongs to the SspH family.

The protein resides in the spore core. This Bacillus anthracis protein is Small, acid-soluble spore protein H 1 (sspH1).